Here is a 217-residue protein sequence, read N- to C-terminus: Pyridoxine/pyridoxamine 5'-phosphate oxidase (217 aa).

Substrate contacts are provided by residues 13 to 16 and K71; that span reads RREY. FMN contacts are provided by residues 66–71, 81–82, R87, K88, and Q110; these read RIVLLK and YT. Residues Y128, R132, and S136 each contribute to the substrate site. Residues 145–146 and W190 contribute to the FMN site; that span reads QS. 196 to 198 contacts substrate; the sequence is RLH. R200 is a binding site for FMN.

Belongs to the pyridoxamine 5'-phosphate oxidase family. Homodimer. It depends on FMN as a cofactor.

The enzyme catalyses pyridoxamine 5'-phosphate + O2 + H2O = pyridoxal 5'-phosphate + H2O2 + NH4(+). It carries out the reaction pyridoxine 5'-phosphate + O2 = pyridoxal 5'-phosphate + H2O2. The protein operates within cofactor metabolism; pyridoxal 5'-phosphate salvage; pyridoxal 5'-phosphate from pyridoxamine 5'-phosphate: step 1/1. It participates in cofactor metabolism; pyridoxal 5'-phosphate salvage; pyridoxal 5'-phosphate from pyridoxine 5'-phosphate: step 1/1. Catalyzes the oxidation of either pyridoxine 5'-phosphate (PNP) or pyridoxamine 5'-phosphate (PMP) into pyridoxal 5'-phosphate (PLP). This Proteus mirabilis (strain HI4320) protein is Pyridoxine/pyridoxamine 5'-phosphate oxidase.